Consider the following 742-residue polypeptide: UPF0313 protein MA_4618 (742 aa).

The interval 1–125 is disordered; the sequence is MGVRKQTMVK…SFSSSLPASK (125 aa). Residues 1-128 form a unknown region; the sequence is MGVRKQTMVK…SSLPASKFLP (128 aa). 2 stretches are compositionally biased toward basic and acidic residues: residues 17-40 and 49-73; these read ENKK…ERAG and KKVE…KAEG. Basic residues predominate over residues 106 to 115; the sequence is TGKKEKKQKK. The segment at 129-742 is UPF0313; the sequence is MSPEEVKARG…KCLIRRKEKQ (614 aa). Residues 438-707 form the Radical SAM core domain; the sequence is ALEMVKFSLT…AMQRALMHYR (270 aa). [4Fe-4S] cluster is bound by residues C452, C456, and C459.

This sequence in the C-terminal section; belongs to the UPF0313 family. It depends on [4Fe-4S] cluster as a cofactor.

In Methanosarcina acetivorans (strain ATCC 35395 / DSM 2834 / JCM 12185 / C2A), this protein is UPF0313 protein MA_4618.